Here is a 146-residue protein sequence, read N- to C-terminus: Hemoglobin subunit beta (146 aa).

Position 1 is an N-acetylvaline (Val1). In terms of domain architecture, Globin spans 2 to 146; sequence HMTDAEKKLV…VANALAHKYH (145 aa). Position 12 is a phosphothreonine (Thr12). Lys59 carries the post-translational modification N6-acetyllysine. Heme b is bound at residue His63. N6-acetyllysine is present on Lys82. His92 lines the heme b pocket. Cys93 carries the post-translational modification S-nitrosocysteine. N6-acetyllysine is present on Lys144.

Belongs to the globin family. Tetramer of two alpha and two different beta chains. Two external cysteine residues at beta-16 and beta-52 cause reversible polymerization to octamers and most likely irreversible formation of higher polymers. As to expression, red blood cells.

In terms of biological role, involved in oxygen transport from the lung to the various peripheral tissues. The protein is Hemoglobin subunit beta (HBB) of Echinops telfairi (Lesser hedgehog tenrec).